We begin with the raw amino-acid sequence, 284 residues long: 4-diphosphocytidyl-2-C-methyl-D-erythritol kinase (284 aa).

The active site involves Lys-14. 98–108 (PMGGGLGGGSS) provides a ligand contact to ATP. Residue Asp-140 is part of the active site.

The protein belongs to the GHMP kinase family. IspE subfamily.

It carries out the reaction 4-CDP-2-C-methyl-D-erythritol + ATP = 4-CDP-2-C-methyl-D-erythritol 2-phosphate + ADP + H(+). The protein operates within isoprenoid biosynthesis; isopentenyl diphosphate biosynthesis via DXP pathway; isopentenyl diphosphate from 1-deoxy-D-xylulose 5-phosphate: step 3/6. Functionally, catalyzes the phosphorylation of the position 2 hydroxy group of 4-diphosphocytidyl-2C-methyl-D-erythritol. The protein is 4-diphosphocytidyl-2-C-methyl-D-erythritol kinase of Shewanella putrefaciens (strain CN-32 / ATCC BAA-453).